A 356-amino-acid polypeptide reads, in one-letter code: Photosystem II protein D1 4 (356 aa).

Helical transmembrane passes span 32-49 (YIGWFGVLSIPTLLAATT), 121-136 (HFLIGIWCLLGRFWEL), and 145-159 (WIAVAYSAPVIAATS). Residue His-121 coordinates chlorophyll a. Positions 173 and 192 each coordinate [CaMn4O5] cluster. A helical membrane pass occupies residues 200 to 221 (FHMLGVAGVFGGALLSSLHGSL). His-201 contributes to the chlorophyll a binding site. His-218 provides a ligand contact to a quinone. Positions 218 and 276 each coordinate Fe cation. A helical transmembrane segment spans residues 278–292 (LLAALPTIGIWFAAM). Residue His-336 participates in [CaMn4O5] cluster binding.

It belongs to the reaction center PufL/M/PsbA/D family. PSII is composed of 1 copy each of membrane proteins PsbA, PsbB, PsbC, PsbD, PsbE, PsbF, PsbH, PsbI, PsbJ, PsbK, PsbL, PsbM, PsbT, PsbX, PsbY, PsbZ, Psb30/Ycf12, peripheral proteins PsbO, CyanoQ (PsbQ), PsbU, PsbV and a large number of cofactors. It forms dimeric complexes. The cofactor is The D1/D2 heterodimer binds P680, chlorophylls that are the primary electron donor of PSII, and subsequent electron acceptors. It shares a non-heme iron and each subunit binds pheophytin, quinone, additional chlorophylls, carotenoids and lipids. D1 provides most of the ligands for the Mn4-Ca-O5 cluster of the oxygen-evolving complex (OEC). There is also a Cl(-1) ion associated with D1 and D2, which is required for oxygen evolution. The PSII complex binds additional chlorophylls, carotenoids and specific lipids.. Tyr-164 forms a radical intermediate that is referred to as redox-active TyrZ, YZ or Y-Z.

It is found in the cellular thylakoid membrane. The catalysed reaction is 2 a plastoquinone + 4 hnu + 2 H2O = 2 a plastoquinol + O2. In terms of biological role, photosystem II (PSII) is a light-driven water:plastoquinone oxidoreductase that uses light energy to abstract electrons from H(2)O, generating O(2) and a proton gradient subsequently used for ATP formation. It consists of a core antenna complex that captures photons, and an electron transfer chain that converts photonic excitation into a charge separation. The D1/D2 (PsbA/PsbD) reaction center heterodimer binds P680, the primary electron donor of PSII as well as several subsequent electron acceptors. The chain is Photosystem II protein D1 4 from Trichormus variabilis (strain ATCC 29413 / PCC 7937) (Anabaena variabilis).